We begin with the raw amino-acid sequence, 165 residues long: uncharacterized protein (165 aa).

Residues 1 to 165 (MDIKVVKGSI…EAWEKVLGLR (165 aa)) enclose the Macro domain.

This is an uncharacterized protein from Aquifex aeolicus (strain VF5).